The chain runs to 269 residues: Putative imidazole glycerol phosphate synthase subunit hisF2 (269 aa).

Asp133 is an active-site residue.

Belongs to the HisA/HisF family. As to quaternary structure, heterodimer of HisH and HisF.

Its subcellular location is the cytoplasm. It catalyses the reaction 5-[(5-phospho-1-deoxy-D-ribulos-1-ylimino)methylamino]-1-(5-phospho-beta-D-ribosyl)imidazole-4-carboxamide + L-glutamine = D-erythro-1-(imidazol-4-yl)glycerol 3-phosphate + 5-amino-1-(5-phospho-beta-D-ribosyl)imidazole-4-carboxamide + L-glutamate + H(+). It functions in the pathway amino-acid biosynthesis; L-histidine biosynthesis; L-histidine from 5-phospho-alpha-D-ribose 1-diphosphate: step 5/9. Its function is as follows. IGPS catalyzes the conversion of PRFAR and glutamine to IGP, AICAR and glutamate. The HisF subunit catalyzes the cyclization activity that produces IGP and AICAR from PRFAR using the ammonia provided by the HisH subunit. This chain is Putative imidazole glycerol phosphate synthase subunit hisF2 (hisF2), found in Parasynechococcus marenigrum (strain WH8102).